A 401-amino-acid chain; its full sequence is Imidazolonepropionase (401 aa).

Residues histidine 70 and histidine 72 each coordinate Fe(3+). Residues histidine 70 and histidine 72 each contribute to the Zn(2+) site. Residues arginine 79, tyrosine 142, and histidine 175 each coordinate 4-imidazolone-5-propanoate. Tyrosine 142 provides a ligand contact to N-formimidoyl-L-glutamate. Histidine 238 contributes to the Fe(3+) binding site. Position 238 (histidine 238) interacts with Zn(2+). Residue glutamine 241 coordinates 4-imidazolone-5-propanoate. Aspartate 313 serves as a coordination point for Fe(3+). A Zn(2+)-binding site is contributed by aspartate 313. N-formimidoyl-L-glutamate contacts are provided by asparagine 315 and glycine 317. A 4-imidazolone-5-propanoate-binding site is contributed by threonine 318.

This sequence belongs to the metallo-dependent hydrolases superfamily. HutI family. It depends on Zn(2+) as a cofactor. The cofactor is Fe(3+).

It localises to the cytoplasm. The enzyme catalyses 4-imidazolone-5-propanoate + H2O = N-formimidoyl-L-glutamate. It functions in the pathway amino-acid degradation; L-histidine degradation into L-glutamate; N-formimidoyl-L-glutamate from L-histidine: step 3/3. In terms of biological role, catalyzes the hydrolytic cleavage of the carbon-nitrogen bond in imidazolone-5-propanoate to yield N-formimidoyl-L-glutamate. It is the third step in the universal histidine degradation pathway. The protein is Imidazolonepropionase of Xanthomonas axonopodis pv. citri (strain 306).